A 286-amino-acid chain; its full sequence is E3 ubiquitin-protein ligase RNF170 (286 aa).

Residues 1–52 (MQRYWRFQDNKIQDICFGVLGESWIQRPVMARYYSEGQSLQQDDSFIEGVSD) are Lumenal-facing. The helical transmembrane segment at 53–73 (QVLVAVVVSLALTATLLYALL) threads the bilayer. Residues 74–229 (RNVQQNIHPE…GGLFWMFRIR (156 aa)) are Cytoplasmic-facing. The RING-type zinc-finger motif lies at 115–158 (CPICLHQASFPVETNCGHLFCGSCIIAYWRYGSWLGAISCPICR). The chain crosses the membrane as a helical span at residues 230–250 (IMLCLMGAFFYLISPLDFVPE). Position 251 (Ala251) is a topological domain, lumenal. A helical membrane pass occupies residues 252–272 (LFGILGFLDDFFVIFLLLIYI). Over 273–286 (SIMYREVITQRLTR) the chain is Cytoplasmic.

In terms of assembly, constitutively associated with the ERLIN1/ERLIN 2 complex. Interacts with activated ITPR1.

The protein localises to the endoplasmic reticulum membrane. The enzyme catalyses S-ubiquitinyl-[E2 ubiquitin-conjugating enzyme]-L-cysteine + [acceptor protein]-L-lysine = [E2 ubiquitin-conjugating enzyme]-L-cysteine + N(6)-ubiquitinyl-[acceptor protein]-L-lysine.. The protein operates within protein modification; protein ubiquitination. E3 ubiquitin-protein ligase that plays an essential role in stimulus-induced inositol 1,4,5-trisphosphate receptor type 1 (ITPR1) ubiquitination and degradation via the endoplasmic reticulum-associated degradation (ERAD) pathway. Also involved in ITPR1 turnover in resting cells. Selectively inhibits the TLR3-triggered innate immune response by promoting the 'Lys-48'-linked polyubiquitination and degradation of TLR3. This Mus musculus (Mouse) protein is E3 ubiquitin-protein ligase RNF170 (Rnf170).